A 275-amino-acid chain; its full sequence is 2-dehydro-3-deoxyphosphooctonate aldolase (275 aa).

It belongs to the KdsA family.

Its subcellular location is the cytoplasm. The enzyme catalyses D-arabinose 5-phosphate + phosphoenolpyruvate + H2O = 3-deoxy-alpha-D-manno-2-octulosonate-8-phosphate + phosphate. It functions in the pathway carbohydrate biosynthesis; 3-deoxy-D-manno-octulosonate biosynthesis; 3-deoxy-D-manno-octulosonate from D-ribulose 5-phosphate: step 2/3. Its pathway is bacterial outer membrane biogenesis; lipopolysaccharide biosynthesis. This chain is 2-dehydro-3-deoxyphosphooctonate aldolase, found in Francisella tularensis subsp. mediasiatica (strain FSC147).